Consider the following 422-residue polypeptide: Testin (422 aa).

A PET domain is found at M92 to E199. The disordered stretch occupies residues Q135–H165. Positions P155 to H165 are enriched in basic and acidic residues. LIM zinc-binding domains are found at residues Y234–P299, R300–V359, and S360–S422.

The protein belongs to the prickle / espinas / testin family. As to expression, expressed in the animal hemisphere at the 4-cell stage. By stage 18, expressed in cells adjacent to the anterior neural plate. In late neurula, expressed in the cranial neural crest. At tail bud stages, expressed strongly in the head, ventral to the developing eye, branchial arches and lateral line placodes. Also localized in the otic vesicle, dorsal fin and notochord with weaker expression at intersomitic junctions of tail bud embryos.

It localises to the cytoplasm. The protein localises to the cell cortex. Its subcellular location is the cell junction. The protein resides in the focal adhesion. Functionally, scaffold protein that may play a role in cell adhesion, cell spreading and in the reorganization of the actin cytoskeleton. May inhibit cell growth. Regulates cranial neural crest migration. Acts together with prickle1 to control axial elongation. This is Testin from Xenopus laevis (African clawed frog).